A 251-amino-acid polypeptide reads, in one-letter code: Triosephosphate isomerase (251 aa).

Position 9 to 11 (9 to 11 (NWK)) interacts with substrate. His96 acts as the Electrophile in catalysis. Glu167 acts as the Proton acceptor in catalysis. Substrate is bound by residues Gly173, Ser213, and 234–235 (GG).

Belongs to the triosephosphate isomerase family. As to quaternary structure, homodimer.

Its subcellular location is the cytoplasm. It carries out the reaction D-glyceraldehyde 3-phosphate = dihydroxyacetone phosphate. The protein operates within carbohydrate biosynthesis; gluconeogenesis. Its pathway is carbohydrate degradation; glycolysis; D-glyceraldehyde 3-phosphate from glycerone phosphate: step 1/1. Involved in the gluconeogenesis. Catalyzes stereospecifically the conversion of dihydroxyacetone phosphate (DHAP) to D-glyceraldehyde-3-phosphate (G3P). The chain is Triosephosphate isomerase from Bacteroides fragilis (strain ATCC 25285 / DSM 2151 / CCUG 4856 / JCM 11019 / LMG 10263 / NCTC 9343 / Onslow / VPI 2553 / EN-2).